The chain runs to 88 residues: Large ribosomal subunit protein bL27 (88 aa).

Positions 1–13 are enriched in low complexity; that stretch reads MATKKSGGSSSNG. Residues 1–24 form a disordered region; the sequence is MATKKSGGSSSNGRDSRGRRLGVK.

Belongs to the bacterial ribosomal protein bL27 family.

This is Large ribosomal subunit protein bL27 from Ehrlichia ruminantium (strain Gardel).